A 266-amino-acid polypeptide reads, in one-letter code: 5'-nucleotidase SurE (266 aa).

A divalent metal cation contacts are provided by Asp8, Asp9, Ser42, and Asn98.

This sequence belongs to the SurE nucleotidase family. The cofactor is a divalent metal cation.

It localises to the cytoplasm. The catalysed reaction is a ribonucleoside 5'-phosphate + H2O = a ribonucleoside + phosphate. Nucleotidase that shows phosphatase activity on nucleoside 5'-monophosphates. The protein is 5'-nucleotidase SurE of Methanocaldococcus jannaschii (strain ATCC 43067 / DSM 2661 / JAL-1 / JCM 10045 / NBRC 100440) (Methanococcus jannaschii).